The chain runs to 1321 residues: Bile salt export pump (1321 aa).

Residues 1 to 62 (MSDSVILRSV…FSSSKDIWLM (62 aa)) lie on the Cytoplasmic side of the membrane. The region spanning 62 to 385 (MLMGGVCALL…ASSCLEIFST (324 aa)) is the ABC transmembrane type-1 1 domain. A helical membrane pass occupies residues 63-83 (LMGGVCALLHGMAQPGILIIF). The Extracellular portion of the chain corresponds to 84–147 (GIMTDIFIKY…MIKFSGIYAG (64 aa)). Asn109, Asn116, Asn122, and Asn125 each carry an N-linked (GlcNAc...) asparagine glycan. Residues 148–168 (VGMTVLILGYFQIRLWVITGA) form a helical membrane-spanning segment. Topologically, residues 169–215 (RQIRRMRKIYFRRIMRMEIGWFDCTSVGELNSRFADDIEKINDAIAD) are cytoplasmic. The chain crosses the membrane as a helical span at residues 216–236 (QLAHFLQRMSTAMCGLLLGFY). Residues 237-240 (RGWK) lie on the Extracellular side of the membrane. The chain crosses the membrane as a helical span at residues 241 to 261 (LTLVILAVSPLIGIGAAVIGL). Residues 262–319 (SIAKFTELELKAYAKAGSIADEVLSSIRTVAAFGGENKEVERYEKNLVFAQRWGIWKG) are Cytoplasmic-facing. A helical membrane pass occupies residues 320–340 (MVMGFFTGYMWCLIFFCYALA). The Extracellular portion of the chain corresponds to 341–353 (FWYGSTLVLDEEE). The chain crosses the membrane as a helical span at residues 354–374 (YTPGTLVQIFLCVILAAMNIG). At 375 to 755 (HASSCLEIFS…KYNIPEWHYI (381 aa)) the chain is on the cytoplasmic side. The ABC transporter 1 domain maps to 420–656 (IEFHNVTFHY…KGVYFMLVTL (237 aa)). 455–462 (GSSGAGKS) contacts ATP. Residue Thr586 is modified to Phosphothreonine. Residue Ser587 is modified to Phosphoserine. Residues 651 to 674 (FMLVTLQSQGDNAHKETSIMGKDA) form an interaction with HAX1 region. A phosphoserine mark is found at Ser692, Ser703, and Ser706. The region spanning 755 to 1043 (ILVGSLSAAI…TFSYTPSYAK (289 aa)) is the ABC transmembrane type-1 2 domain. The helical transmembrane segment at 756–776 (LVGSLSAAINGAVTPIYSLLF) threads the bilayer. Topologically, residues 777–794 (SQLLGTFSLLDKEQQRSE) are extracellular. Residues 795 to 815 (IHSMCLFFVILGCVSIFTQFL) traverse the membrane as a helical segment. Residues 816–869 (QGYTFAKSGELLTKRLRKFGFKAMLGQDIGWFDDLRNNPGVLTTRLATDASQVQ) are Cytoplasmic-facing. A run of 2 helical transmembrane segments spans residues 870-890 (GATG…IAAL) and 891-911 (LIAF…FPFL). Topologically, residues 912-979 (ALSGAVQTKM…SYKTAVRKAN (68 aa)) are cytoplasmic. The helical transmembrane segment at 980-1000 (IYGLCFAFSQGIAFLANSAAY) threads the bilayer. Residues 1001-1011 (RYGGYLIAYEG) lie on the Extracellular side of the membrane. Residues 1012–1032 (LGFSHVFRVVSSVALSATAVG) form a helical membrane-spanning segment. At 1033 to 1321 (RTFSYTPSYA…KLVITGAPIS (289 aa)) the chain is on the cytoplasmic side. The region spanning 1078 to 1316 (IDFIDCKFTY…KGAYYKLVIT (239 aa)) is the ABC transporter 2 domain. 1113 to 1120 (GSSGCGKS) is a binding site for ATP. Position 1321 is a phosphoserine (Ser1321).

The protein belongs to the ABC transporter superfamily. ABCB family. Multidrug resistance exporter (TC 3.A.1.201) subfamily. Interacts with HAX1. Interacts with the adapter protein complex 2 (AP-2) throught AP2A2 or AP2A1; this interaction regulates cell membrane expression of ABCB11 through its internalization in a clathrin-dependent manner and its subsequent degradation. In terms of processing, ubiquitinated; short-chain ubiquitination regulates cell-Surface expression of ABCB11. Post-translationally, N-glycosylated. As to expression, expressed predominantly, if not exclusively in the liver, where it was further localized to the canalicular microvilli and to subcanalicular vesicles of the hepatocytes by in situ.

It localises to the apical cell membrane. The protein localises to the recycling endosome membrane. Its subcellular location is the endosome. The protein resides in the cell membrane. It carries out the reaction cholate(in) + ATP + H2O = cholate(out) + ADP + phosphate + H(+). It catalyses the reaction taurocholate(in) + ATP + H2O = taurocholate(out) + ADP + phosphate + H(+). The catalysed reaction is glycocholate(in) + ATP + H2O = glycocholate(out) + ADP + phosphate + H(+). The enzyme catalyses glycochenodeoxycholate(in) + ATP + H2O = glycochenodeoxycholate(out) + ADP + phosphate + H(+). It carries out the reaction taurochenodeoxycholate(in) + ATP + H2O = taurochenodeoxycholate(out) + ADP + phosphate + H(+). It catalyses the reaction glycoursodeoxycholate(in) + ATP + H2O = glycoursodeoxycholate(out) + ADP + phosphate + H(+). The catalysed reaction is tauroursodeoxycholate(in) + ATP + H2O = tauroursodeoxycholate(out) + ADP + phosphate + H(+). The enzyme catalyses taurodeoxycholate(in) + ATP + H2O = taurodeoxycholate(out) + ADP + phosphate + H(+). It carries out the reaction pravastatin(in) + ATP + H2O = pravastatin(out) + ADP + phosphate + H(+). Its activity is regulated as follows. The uptake of taurocholate is inhibited by taurolithocholate sulfate with an IC(50) of 52.9 uM. Pravastatin competitively inhibits the transport of taurocholic acid. Cyclosporin A, glibenclamide, rifampicin and troglitazonestrongly competitively inhibit the transport activity of taurocholate. The canalicular transport activity of taurocholate is strongly dependent on canalicular membrane cholesterol content. The uptake of taurocholate is increased by short- and medium-chain fatty acids. Cholesterol increases transport capacity of taurocholate without affecting the affinity for the substrate. Its function is as follows. Catalyzes the transport of the major hydrophobic bile salts, such as taurine and glycine-conjugated cholic acid across the canalicular membrane of hepatocytes in an ATP-dependent manner, therefore participates in hepatic bile acid homeostasis and consequently to lipid homeostasis through regulation of biliary lipid secretion in a bile salts dependent manner. Transports taurine-conjugated bile salts more rapidly than glycine-conjugated bile salts. Also transports non-bile acid compounds, such as pravastatin and fexofenadine in an ATP-dependent manner and may be involved in their biliary excretion. The protein is Bile salt export pump of Rattus norvegicus (Rat).